A 367-amino-acid polypeptide reads, in one-letter code: 2-aminoethylphosphonate--pyruvate transaminase (367 aa).

Lys-194 is subject to N6-(pyridoxal phosphate)lysine.

This sequence belongs to the class-V pyridoxal-phosphate-dependent aminotransferase family. PhnW subfamily. As to quaternary structure, homodimer. Pyridoxal 5'-phosphate serves as cofactor.

It catalyses the reaction (2-aminoethyl)phosphonate + pyruvate = phosphonoacetaldehyde + L-alanine. Involved in phosphonate degradation. This is 2-aminoethylphosphonate--pyruvate transaminase from Klebsiella pneumoniae subsp. pneumoniae (strain ATCC 700721 / MGH 78578).